The following is a 62-amino-acid chain: Large ribosomal subunit protein bL28 (62 aa).

The disordered stretch occupies residues 1-23; it reads MARRCFVTGKSAKAGNARSHSMR.

This sequence belongs to the bacterial ribosomal protein bL28 family.

The protein is Large ribosomal subunit protein bL28 of Brevibacillus brevis (strain 47 / JCM 6285 / NBRC 100599).